We begin with the raw amino-acid sequence, 516 residues long: uncharacterized protein (516 aa).

A signal peptide spans 1–17 (MSVWVALALLGMCVSCT). Disordered stretches follow at residues 29–197 (KEPP…EVPR) and 296–426 (RTVS…RDHL). The span at 71–85 (RVPESSQEREQKPES) shows a compositional bias: basic and acidic residues. Positions 122 to 144 (VAPPAPPAPTAPRPHRPSPPPVS) are enriched in pro residues. Low complexity predominate over residues 145–155 (PSASKPKQRAV). The segment covering 351-367 (KAQHGTPRPDEKKDREP) has biased composition (basic and acidic residues). Low complexity predominate over residues 394–406 (SPASQPSAPSAAP). Basic and acidic residues predominate over residues 415 to 426 (AHKEGQEKRDHL).

This is an uncharacterized protein from Treponema pallidum (strain Nichols).